The following is a 267-amino-acid chain: Putative ankyrin repeat protein RF_1099 (267 aa).

ANK repeat units lie at residues 46 to 75 (DPITPIADAIKADNLEEVKKILDEGYGVNQ), 78 to 107 (LGWVPLDYAISNNNIKIADFLLKRDASMSL), 136 to 165 (DGITGMMLAAERNNPDLIKLLLKLGVNPNV), and 170 to 199 (TGMTSLMYAASYLNVEVVRVLLEQGVDPNI). A coiled-coil region spans residues 238-265 (KQKIIKERNSIKTRNKEKEKEIKKLFNS).

This chain is Putative ankyrin repeat protein RF_1099, found in Rickettsia felis (strain ATCC VR-1525 / URRWXCal2) (Rickettsia azadi).